Here is a 288-residue protein sequence, read N- to C-terminus: 4-hydroxybenzoate octaprenyltransferase (288 aa).

The next 6 helical transmembrane spans lie at 33 to 53 (LWAL…AVFV), 99 to 119 (LFIV…TMTI), 163 to 183 (ESLP…AVAY), 213 to 233 (LIIG…GWLN), 234 to 254 (GLGW…GWQQ), and 268 to 288 (AFMN…MSYL).

This sequence belongs to the UbiA prenyltransferase family. Requires Mg(2+) as cofactor.

It is found in the cell inner membrane. The catalysed reaction is all-trans-octaprenyl diphosphate + 4-hydroxybenzoate = 4-hydroxy-3-(all-trans-octaprenyl)benzoate + diphosphate. It functions in the pathway cofactor biosynthesis; ubiquinone biosynthesis. Catalyzes the prenylation of para-hydroxybenzoate (PHB) with an all-trans polyprenyl group. Mediates the second step in the final reaction sequence of ubiquinone-8 (UQ-8) biosynthesis, which is the condensation of the polyisoprenoid side chain with PHB, generating the first membrane-bound Q intermediate 3-octaprenyl-4-hydroxybenzoate. The polypeptide is 4-hydroxybenzoate octaprenyltransferase (Klebsiella pneumoniae subsp. pneumoniae (strain ATCC 700721 / MGH 78578)).